Reading from the N-terminus, the 290-residue chain is Short-chain dehydrogenase srdE (290 aa).

Residues Ile11, Thr37, Asp58, and Asn86 each contribute to the NADP(+) site. A helical membrane pass occupies residues 125-145 (LIASSGIIVNIGSIGGVVPFV). Tyr150 serves as a coordination point for NADP(+). Tyr150 serves as the catalytic Proton donor. An N-linked (GlcNAc...) asparagine glycan is attached at Asn151. 3 residues coordinate NADP(+): Lys154, Val183, and Thr185. Lys154 acts as the Lowers pKa of active site Tyr in catalysis.

It belongs to the short-chain dehydrogenases/reductases (SDR) family.

The protein resides in the membrane. Short-chain dehydrogenase; part of the gene cluster that mediates the biosynthesis of sordarial, a salicylic aldehyde structurally related to the phytotoxin pyriculol. The most interesting aspect of this pathway is formation of an aromatic product from the highly reducing polyketide synthase srdA. SrdA synthesizes a reduced polyketide chain from one molecule of acetyl-CoA and five molecules of malonyl-CoA. The polyketide chain is then reductively released as an aldehyde. The oxidoreductases srdC, srdD and srdE then oxidize one of the hydroxy groups to facilitate the intramolecular aldol condensation, followed by dehydration to yield a salicylic aldehyde. This aldehyde can undergo facile reduction by endogenous reductases to yield the alcohol 1-hydroxy-2-hydroxymethyl-3-pent-1,3-dienylbenzene. The flavin-dependent srdI counteract against the propensity of the aldehydes to be reduced under physiological conditions and is responsible for reoxidizing 1-hydroxy-2-hydroxymethyl-3-pent-1,3-dienylbenzene back to the salicylic aldehyde. This salicylic aldehyde is then selectively epoxidized by the cupin-domain-containing oxidoreductase srdB to yield the epoxide, which can be hydrolyzed stereoselectively by the hydrolase srdG to give the final product sordarial. In Neurospora crassa (strain ATCC 24698 / 74-OR23-1A / CBS 708.71 / DSM 1257 / FGSC 987), this protein is Short-chain dehydrogenase srdE.